Reading from the N-terminus, the 506-residue chain is Tyrosine-protein kinase isoform SRK4 (506 aa).

2 stretches are compositionally biased toward polar residues: residues M1 to G10 and A18 to V31. A disordered region spans residues M1–D53. Residues V54 to S116 enclose the SH3 domain. Residues W122–C214 form the SH2 domain. Residues I240–F493 enclose the Protein kinase domain. Residues L246–V254 and K268 each bind ATP. D359 serves as the catalytic Proton acceptor.

Belongs to the protein kinase superfamily. Tyr protein kinase family.

It localises to the cytoplasm. The catalysed reaction is L-tyrosyl-[protein] + ATP = O-phospho-L-tyrosyl-[protein] + ADP + H(+). The sequence is that of Tyrosine-protein kinase isoform SRK4 (SRK1) from Spongilla lacustris (Freshwater sponge).